The following is a 249-amino-acid chain: Phosphate import ATP-binding protein PstB 1 (249 aa).

In terms of domain architecture, ABC transporter spans F4 to V244. G36 to S43 provides a ligand contact to ATP.

It belongs to the ABC transporter superfamily. Phosphate importer (TC 3.A.1.7) family. The complex is composed of two ATP-binding proteins (PstB), two transmembrane proteins (PstC and PstA) and a solute-binding protein (PstS).

The protein localises to the cell inner membrane. The catalysed reaction is phosphate(out) + ATP + H2O = ADP + 2 phosphate(in) + H(+). Part of the ABC transporter complex PstSACB involved in phosphate import. Responsible for energy coupling to the transport system. This is Phosphate import ATP-binding protein PstB 1 from Aliivibrio fischeri (strain ATCC 700601 / ES114) (Vibrio fischeri).